A 558-amino-acid polypeptide reads, in one-letter code: Ribonuclease J (558 aa).

Zn(2+)-binding residues include His-81, His-83, Asp-85, His-86, His-148, and Asp-170. 371–375 (HVSGH) is a binding site for substrate. Residue His-397 participates in Zn(2+) binding.

Belongs to the metallo-beta-lactamase superfamily. RNA-metabolizing metallo-beta-lactamase-like family. Bacterial RNase J subfamily. As to quaternary structure, homodimer. Requires Zn(2+) as cofactor.

It is found in the cytoplasm. Its function is as follows. An RNase that has endonuclease and 5'-3' exonuclease activity. The 5'-exonuclease activity acts on 5'-monophosphate but not 5'-triphosphate ends. Endonuclease activity can cleave within 4 nucleotides of the 5'-end of a triphosphorylated RNA. Plays the major role in pre-23S rRNA maturation, and a minor role in processing of pre-5S and pre-16S rRNA. The sequence is that of Ribonuclease J from Mycolicibacterium smegmatis (strain ATCC 700084 / mc(2)155) (Mycobacterium smegmatis).